The chain runs to 138 residues: Putative pre-16S rRNA nuclease (138 aa).

The protein belongs to the YqgF nuclease family.

The protein resides in the cytoplasm. Functionally, could be a nuclease involved in processing of the 5'-end of pre-16S rRNA. The protein is Putative pre-16S rRNA nuclease of Enterobacter sp. (strain 638).